The primary structure comprises 78 residues: MPQQRKGGRRRRKVDLIAANHIDYVDYKDVDLLKHFISERGKILPRRVTGTSAKNQRKVANAIKRARIMGLLPFVAED.

It belongs to the bacterial ribosomal protein bS18 family. Part of the 30S ribosomal subunit. Forms a tight heterodimer with protein bS6.

Its function is as follows. Binds as a heterodimer with protein bS6 to the central domain of the 16S rRNA, where it helps stabilize the platform of the 30S subunit. The protein is Small ribosomal subunit protein bS18 of Lactobacillus delbrueckii subsp. bulgaricus (strain ATCC BAA-365 / Lb-18).